A 315-amino-acid polypeptide reads, in one-letter code: Adenine deaminase (315 aa).

Residues H14, H16, and H194 each coordinate Zn(2+). Residue E197 is the Proton donor of the active site. A Zn(2+)-binding site is contributed by D275. Substrate is bound at residue D276.

This sequence belongs to the metallo-dependent hydrolases superfamily. Adenosine and AMP deaminases family. Adenine deaminase type 2 subfamily. Requires Zn(2+) as cofactor.

The catalysed reaction is adenine + H2O + H(+) = hypoxanthine + NH4(+). Functionally, catalyzes the hydrolytic deamination of adenine to hypoxanthine. Plays an important role in the purine salvage pathway and in nitrogen catabolism. In Ectopseudomonas mendocina (strain ymp) (Pseudomonas mendocina), this protein is Adenine deaminase.